The chain runs to 136 residues: Small ribosomal subunit protein uS9 (136 aa).

Residues 111-136 are disordered; the sequence is TRDPRMKERKKTGQPGARKRFQFSKR. Basic residues predominate over residues 117-136; that stretch reads KERKKTGQPGARKRFQFSKR.

It belongs to the universal ribosomal protein uS9 family.

The protein is Small ribosomal subunit protein uS9 of Methylacidiphilum infernorum (isolate V4) (Methylokorus infernorum (strain V4)).